Reading from the N-terminus, the 365-residue chain is tRNA N6-adenosine threonylcarbamoyltransferase (365 aa).

The Fe cation site is built by H119 and H123. Substrate contacts are provided by residues 141 to 145 (LVSGG), D174, G187, and N288. D316 is a binding site for Fe cation.

This sequence belongs to the KAE1 / TsaD family. Fe(2+) is required as a cofactor.

The protein resides in the cytoplasm. It catalyses the reaction L-threonylcarbamoyladenylate + adenosine(37) in tRNA = N(6)-L-threonylcarbamoyladenosine(37) in tRNA + AMP + H(+). Its function is as follows. Required for the formation of a threonylcarbamoyl group on adenosine at position 37 (t(6)A37) in tRNAs that read codons beginning with adenine. Is involved in the transfer of the threonylcarbamoyl moiety of threonylcarbamoyl-AMP (TC-AMP) to the N6 group of A37, together with TsaE and TsaB. TsaD likely plays a direct catalytic role in this reaction. This Rhizobium etli (strain CIAT 652) protein is tRNA N6-adenosine threonylcarbamoyltransferase.